Here is a 398-residue protein sequence, read N- to C-terminus: Cyclin-dependent kinase D-1 (398 aa).

One can recognise a Protein kinase domain in the interval 11 to 291; it reads YLKREVLGQG…IQQALKHRYF (281 aa). Residues 17–25 and Lys40 each bind ATP; that span reads LGQGTYGVV. Tyr22 carries the phosphotyrosine modification. Asp133 functions as the Proton acceptor in the catalytic mechanism. A Phosphoserine modification is found at Ser160. Residue Thr166 is modified to Phosphothreonine. A disordered region spans residues 296-318; sequence SPTDPLKLPRPVSKQDAKSSDSK. A compositionally biased stretch (basic and acidic residues) spans 308 to 318; sequence SKQDAKSSDSK.

It belongs to the protein kinase superfamily. CMGC Ser/Thr protein kinase family. CDC2/CDKX subfamily. In terms of processing, autophosphorylated. In terms of tissue distribution, expressed at low levels in suspension cell culture, but not in plant organs.

It is found in the nucleus. It carries out the reaction L-seryl-[protein] + ATP = O-phospho-L-seryl-[protein] + ADP + H(+). The catalysed reaction is L-threonyl-[protein] + ATP = O-phospho-L-threonyl-[protein] + ADP + H(+). It catalyses the reaction [DNA-directed RNA polymerase] + ATP = phospho-[DNA-directed RNA polymerase] + ADP + H(+). In Arabidopsis thaliana (Mouse-ear cress), this protein is Cyclin-dependent kinase D-1 (CDKD-1).